The primary structure comprises 243 residues: 3-deoxy-manno-octulosonate cytidylyltransferase (243 aa).

This sequence belongs to the KdsB family.

It localises to the cytoplasm. The catalysed reaction is 3-deoxy-alpha-D-manno-oct-2-ulosonate + CTP = CMP-3-deoxy-beta-D-manno-octulosonate + diphosphate. Its pathway is nucleotide-sugar biosynthesis; CMP-3-deoxy-D-manno-octulosonate biosynthesis; CMP-3-deoxy-D-manno-octulosonate from 3-deoxy-D-manno-octulosonate and CTP: step 1/1. Activates KDO (a required 8-carbon sugar) for incorporation into bacterial lipopolysaccharide in Gram-negative bacteria. The protein is 3-deoxy-manno-octulosonate cytidylyltransferase of Wigglesworthia glossinidia brevipalpis.